An 806-amino-acid chain; its full sequence is Acetyl-CoA decarbonylase/synthase complex subunit alpha 1 (806 aa).

Residues Cys-73, Cys-76, Cys-77, Cys-79, Cys-84, and Cys-94 each contribute to the [4Fe-4S] cluster site. A CO-binding site is contributed by His-117. Positions 250, 278, and 323 each coordinate [Ni-4Fe-4S] cluster. 4Fe-4S ferredoxin-type domains follow at residues 407 to 436 (DEEFADWVAKCADCGACMIACPEELDIPEA) and 446 to 475 (SYLEELHDQCIGCRRCEQVCKKEIPILNII). The [4Fe-4S] cluster site is built by Cys-417, Cys-420, Cys-423, Cys-427, Cys-455, Cys-458, Cys-461, and Cys-465. [Ni-4Fe-4S] cluster-binding residues include Cys-523, Cys-552, and Cys-587.

This sequence belongs to the Ni-containing carbon monoxide dehydrogenase family. Heterotetramer of two alpha and two epsilon subunits. The ACDS complex is made up of alpha, epsilon, beta, gamma and delta subunits with a probable stoichiometry of (alpha(2)epsilon(2))(4)-beta(8)-(gamma(1)delta(1))(8). [4Fe-4S] cluster is required as a cofactor. [Ni-4Fe-4S] cluster serves as cofactor.

The enzyme catalyses CO + 2 oxidized [2Fe-2S]-[ferredoxin] + H2O = 2 reduced [2Fe-2S]-[ferredoxin] + CO2 + 2 H(+). It functions in the pathway one-carbon metabolism; methanogenesis from acetate. In terms of biological role, part of the ACDS complex that catalyzes the reversible cleavage of acetyl-CoA, allowing growth on acetate as sole source of carbon and energy. The alpha-epsilon subcomponent functions as a carbon monoxide dehydrogenase. This chain is Acetyl-CoA decarbonylase/synthase complex subunit alpha 1, found in Methanosarcina acetivorans (strain ATCC 35395 / DSM 2834 / JCM 12185 / C2A).